A 366-amino-acid polypeptide reads, in one-letter code: Chorismate synthase (366 aa).

Residues Arg48 and Arg54 each coordinate NADP(+). FMN contacts are provided by residues 125-127 (RSS), 238-239 (NA), Gly278, 293-297 (KPTSS), and Arg319.

This sequence belongs to the chorismate synthase family. In terms of assembly, homotetramer. The cofactor is FMNH2.

The enzyme catalyses 5-O-(1-carboxyvinyl)-3-phosphoshikimate = chorismate + phosphate. It functions in the pathway metabolic intermediate biosynthesis; chorismate biosynthesis; chorismate from D-erythrose 4-phosphate and phosphoenolpyruvate: step 7/7. Its function is as follows. Catalyzes the anti-1,4-elimination of the C-3 phosphate and the C-6 proR hydrogen from 5-enolpyruvylshikimate-3-phosphate (EPSP) to yield chorismate, which is the branch point compound that serves as the starting substrate for the three terminal pathways of aromatic amino acid biosynthesis. This reaction introduces a second double bond into the aromatic ring system. This chain is Chorismate synthase, found in Burkholderia orbicola (strain MC0-3).